Reading from the N-terminus, the 135-residue chain is Cofilin-4 (135 aa).

An ADF-H domain is found at 3-135 (SCASINDEVI…SQSLVEERCK (133 aa)).

This sequence belongs to the actin-binding proteins ADF family.

It localises to the cytoplasm. Its subcellular location is the cytoskeleton. In terms of biological role, controls actin polymerization and depolymerization. This is Cofilin-4 (cofE) from Dictyostelium discoideum (Social amoeba).